The chain runs to 282 residues: DegV domain-containing protein spr1415 (282 aa).

Positions 3–280 (LAVFTDSSAY…AGSIALGYIP (278 aa)) constitute a DegV domain. Positions 61 and 94 each coordinate hexadecanoate.

Functionally, may bind long-chain fatty acids, such as palmitate, and may play a role in lipid transport or fatty acid metabolism. The chain is DegV domain-containing protein spr1415 from Streptococcus pneumoniae (strain ATCC BAA-255 / R6).